Here is a 471-residue protein sequence, read N- to C-terminus: Soluble pyridine nucleotide transhydrogenase (471 aa).

Residue 41-50 (EREPSVGGGC) coordinates FAD.

Belongs to the class-I pyridine nucleotide-disulfide oxidoreductase family. The cofactor is FAD.

The protein localises to the cytoplasm. The catalysed reaction is NAD(+) + NADPH = NADH + NADP(+). In terms of biological role, conversion of NADPH, generated by peripheral catabolic pathways, to NADH, which can enter the respiratory chain for energy generation. The sequence is that of Soluble pyridine nucleotide transhydrogenase from Aliivibrio fischeri (strain ATCC 700601 / ES114) (Vibrio fischeri).